The chain runs to 826 residues: Putative pentatricopeptide repeat-containing protein At1g13630 (826 aa).

PPR repeat units follow at residues 228 to 262, 263 to 297, 298 to 332, 333 to 367, 368 to 402, 404 to 438, 439 to 473, 474 to 508, 509 to 543, 544 to 578, 579 to 613, 614 to 648, 661 to 695, 696 to 730, 731 to 765, and 766 to 800; these read NEHTYSTVVDGLCRQQKLEDAVLFLRTSEWKDIGP, SVVSFNSIMSGYCKLGFVDMAKSFFCTVLKCGLVP, SVYSHNILINGLCLVGSIAEALELASDMNKHGVEP, DSVTYNILAKGFHLLGMISGAWEVIRDMLDKGLSP, DVITYTILLCGQCQLGNIDMGLVLLKDMLSRGFEL, SIIPCSVMLSGLCKTGRIDEALSLFNQMKADGLSP, DLVAYSIVIHGLCKLGKFDMALWLYDEMCDKRILP, NSRTHGALLLGLCQKGMLLEARSLLDSLISSGETL, DIVLYNIVIDGYAKSGCIEEALELFKVVIETGITP, SVATFNSLIYGYCKTQNIAEARKILDVIKLYGLAP, SVVSYTTLMDAYANCGNTKSIDELRREMKAEGIPP, TNVTYSVIFKGLCRGWKHENCNHVLRERIFEKCKQ, DQITYNTIIQYLCRVKHLSGAFVFLEIMKSRNLDA, SSATYNILIDSLCVYGYIRKADSFIYSLQEQNVSL, SKFAYTTLIKAHCVKGDPEMAVKLFHQLLHRGFNV, and SIRDYSAVINRLCRRHLVNESKFFFCLMLSQGISP.

The protein belongs to the PPR family. P subfamily.

In Arabidopsis thaliana (Mouse-ear cress), this protein is Putative pentatricopeptide repeat-containing protein At1g13630.